Consider the following 200-residue polypeptide: A-type ATP synthase subunit E 3 (200 aa).

The protein belongs to the V-ATPase E subunit family. Has multiple subunits with at least A(3), B(3), C, D, E, F, H, I and proteolipid K(x).

The protein localises to the cell membrane. Its function is as follows. Component of the A-type ATP synthase that produces ATP from ADP in the presence of a proton gradient across the membrane. The chain is A-type ATP synthase subunit E 3 from Methanospirillum hungatei JF-1 (strain ATCC 27890 / DSM 864 / NBRC 100397 / JF-1).